Consider the following 61-residue polypeptide: uncharacterized protein (61 aa).

A signal peptide spans 1 to 30 (MDVEVANMAAKLRVRGLKLPNAIVVSTAIL).

This is an uncharacterized protein from Archaeoglobus fulgidus (strain ATCC 49558 / DSM 4304 / JCM 9628 / NBRC 100126 / VC-16).